We begin with the raw amino-acid sequence, 186 residues long: Photosystem I assembly protein Ycf4 (186 aa).

A run of 2 helical transmembrane segments spans residues 22 to 42 and 57 to 77; these read FCWA…GTSS and IIFF…LFIS.

It belongs to the Ycf4 family.

The protein resides in the plastid. The protein localises to the chloroplast thylakoid membrane. Seems to be required for the assembly of the photosystem I complex. This Dioscorea elephantipes (Elephant's foot yam) protein is Photosystem I assembly protein Ycf4.